The primary structure comprises 254 residues: Large ribosomal subunit protein uL2B (254 aa).

K46 participates in a covalent cross-link: Glycyl lysine isopeptide (Lys-Gly) (interchain with G-Cter in ubiquitin). S52 is subject to Phosphoserine. K93 is covalently cross-linked (Glycyl lysine isopeptide (Lys-Gly) (interchain with G-Cter in ubiquitin)). A Phosphoserine modification is found at S95. Residues K119 and K145 each participate in a glycyl lysine isopeptide (Lys-Gly) (interchain with G-Cter in ubiquitin) cross-link. S159, S160, and S249 each carry phosphoserine.

This sequence belongs to the universal ribosomal protein uL2 family. Component of the large ribosomal subunit (LSU). Mature yeast ribosomes consist of a small (40S) and a large (60S) subunit. The 40S small subunit contains 1 molecule of ribosomal RNA (18S rRNA) and 33 different proteins (encoded by 57 genes). The large 60S subunit contains 3 rRNA molecules (25S, 5.8S and 5S rRNA) and 46 different proteins (encoded by 81 genes).

Its subcellular location is the cytoplasm. Component of the ribosome, a large ribonucleoprotein complex responsible for the synthesis of proteins in the cell. The small ribosomal subunit (SSU) binds messenger RNAs (mRNAs) and translates the encoded message by selecting cognate aminoacyl-transfer RNA (tRNA) molecules. The large subunit (LSU) contains the ribosomal catalytic site termed the peptidyl transferase center (PTC), which catalyzes the formation of peptide bonds, thereby polymerizing the amino acids delivered by tRNAs into a polypeptide chain. The nascent polypeptides leave the ribosome through a tunnel in the LSU and interact with protein factors that function in enzymatic processing, targeting, and the membrane insertion of nascent chains at the exit of the ribosomal tunnel. The polypeptide is Large ribosomal subunit protein uL2B (Saccharomyces cerevisiae (strain ATCC 204508 / S288c) (Baker's yeast)).